The following is a 313-amino-acid chain: Putative phosphoribosylaminoimidazole-succinocarboxamide synthase 2 (313 aa).

It belongs to the SAICAR synthetase family.

The catalysed reaction is 5-amino-1-(5-phospho-D-ribosyl)imidazole-4-carboxylate + L-aspartate + ATP = (2S)-2-[5-amino-1-(5-phospho-beta-D-ribosyl)imidazole-4-carboxamido]succinate + ADP + phosphate + 2 H(+). It participates in purine metabolism; IMP biosynthesis via de novo pathway; 5-amino-1-(5-phospho-D-ribosyl)imidazole-4-carboxamide from 5-amino-1-(5-phospho-D-ribosyl)imidazole-4-carboxylate: step 1/2. The polypeptide is Putative phosphoribosylaminoimidazole-succinocarboxamide synthase 2 (purC2) (Mesorhizobium japonicum (strain LMG 29417 / CECT 9101 / MAFF 303099) (Mesorhizobium loti (strain MAFF 303099))).